Reading from the N-terminus, the 158-residue chain is Putative pre-16S rRNA nuclease (158 aa).

This sequence belongs to the YqgF nuclease family.

The protein resides in the cytoplasm. Could be a nuclease involved in processing of the 5'-end of pre-16S rRNA. This Paracoccus denitrificans (strain Pd 1222) protein is Putative pre-16S rRNA nuclease.